Consider the following 122-residue polypeptide: MSKALLRFVRLSPTKARLIARQIQGMNAELAIASLEFTPNKAARVLSKVVASAVANGSLDAKSALIVSCRVDAGPVLRRSIPRAKGRATAIRKPTSHVFVEVAEGKEMKSSKSHKKNQAEGK.

The segment at 102–122 (VAEGKEMKSSKSHKKNQAEGK) is disordered.

This sequence belongs to the universal ribosomal protein uL22 family. Part of the 50S ribosomal subunit.

This protein binds specifically to 23S rRNA; its binding is stimulated by other ribosomal proteins, e.g. L4, L17, and L20. It is important during the early stages of 50S assembly. It makes multiple contacts with different domains of the 23S rRNA in the assembled 50S subunit and ribosome. In terms of biological role, the globular domain of the protein is located near the polypeptide exit tunnel on the outside of the subunit, while an extended beta-hairpin is found that lines the wall of the exit tunnel in the center of the 70S ribosome. The polypeptide is Large ribosomal subunit protein uL22 (Helicobacter pylori (strain ATCC 700392 / 26695) (Campylobacter pylori)).